A 108-amino-acid chain; its full sequence is ATP-dependent Clp protease adapter protein ClpS (108 aa).

This sequence belongs to the ClpS family. In terms of assembly, binds to the N-terminal domain of the chaperone ClpA.

Its function is as follows. Involved in the modulation of the specificity of the ClpAP-mediated ATP-dependent protein degradation. This Cupriavidus metallidurans (strain ATCC 43123 / DSM 2839 / NBRC 102507 / CH34) (Ralstonia metallidurans) protein is ATP-dependent Clp protease adapter protein ClpS.